A 528-amino-acid polypeptide reads, in one-letter code: Homoserine O-acetyltransferase (528 aa).

In terms of domain architecture, AB hydrolase-1 spans 60–245 (LVICHALTGS…AALLTYRSRD (186 aa)). The Nucleophile role is filled by S154. 2 disordered regions span residues 250 to 335 (RFGR…VKTQ) and 388 to 413 (DLSA…DATE). Residues 273 to 282 (QETTDPSVPS) are compositionally biased toward polar residues. A compositionally biased stretch (basic and acidic residues) spans 295–304 (AWREHNDGHR). Low complexity predominate over residues 389–409 (LSAPSRDTSLSSLSSGLPSSP). Residues D438 and H467 contribute to the active site.

Belongs to the AB hydrolase superfamily. MetX family.

Its subcellular location is the cytoplasm. It carries out the reaction L-homoserine + acetyl-CoA = O-acetyl-L-homoserine + CoA. Its pathway is amino-acid biosynthesis; L-methionine biosynthesis via de novo pathway; O-acetyl-L-homoserine from L-homoserine: step 1/1. Inhibited by 6-carbamoyl-3a,4,5,9b-tetrahydro-3H-cyclopenta[ c]quinoline-4-carboxylic acid (CTCQC). Its function is as follows. Commits homoserine to the methionine biosynthesis pathway by catalyzing its O-acetylation. The polypeptide is Homoserine O-acetyltransferase (Cryptococcus neoformans var. grubii serotype A (strain H99 / ATCC 208821 / CBS 10515 / FGSC 9487) (Filobasidiella neoformans var. grubii)).